The primary structure comprises 176 residues: Shikimate kinase (176 aa).

14–19 (GAGKST) is a binding site for ATP. Serine 18 lines the Mg(2+) pocket. Positions 36, 60, and 83 each coordinate substrate. Arginine 121 is an ATP binding site. Arginine 140 serves as a coordination point for substrate.

The protein belongs to the shikimate kinase family. In terms of assembly, monomer. The cofactor is Mg(2+).

The protein localises to the cytoplasm. It catalyses the reaction shikimate + ATP = 3-phosphoshikimate + ADP + H(+). It functions in the pathway metabolic intermediate biosynthesis; chorismate biosynthesis; chorismate from D-erythrose 4-phosphate and phosphoenolpyruvate: step 5/7. In terms of biological role, catalyzes the specific phosphorylation of the 3-hydroxyl group of shikimic acid using ATP as a cosubstrate. This chain is Shikimate kinase, found in Francisella tularensis subsp. holarctica (strain FTNF002-00 / FTA).